The primary structure comprises 1079 residues: Extracellular calcium-sensing receptor (1079 aa).

A signal peptide spans 1–19; sequence MAWFGYCLALLALTWHSSA. Residues 20–610 lie on the Extracellular side of the membrane; it reads YGPDQRAQKK…KEIEFLAWTE (591 aa). Positions 22–188 are ligand-binding 1 (LB1); the sequence is PDQRAQKKGD…QFKSFLRTIP (167 aa). Residues cysteine 60 and cysteine 101 are joined by a disulfide bond. Residue 66-70 coordinates phosphate; that stretch reads RGFRW. Positions 81, 84, 87, and 88 each coordinate Ca(2+). Asparagine 90 carries N-linked (GlcNAc...) asparagine glycosylation. Threonine 100 contributes to the Ca(2+) binding site. Residue asparagine 130 is glycosylated (N-linked (GlcNAc...) asparagine). Threonine 145 serves as a coordination point for Ca(2+). Residues serine 147, alanine 168, and serine 170 each contribute to the L-tryptophan site. Positions 170, 188, 190, 231, and 234 each coordinate Ca(2+). Residues 189 to 324 are ligand-binding 2 (LB2); that stretch reads NDEHQATAMA…GGTIGFGLKA (136 aa). 7 disulfide bridges follow: cysteine 236–cysteine 561, cysteine 358–cysteine 395, cysteine 437–cysteine 449, cysteine 542–cysteine 562, cysteine 546–cysteine 565, cysteine 568–cysteine 582, and cysteine 585–cysteine 598. Spermine-binding residues include aspartate 238 and serine 240. N-linked (GlcNAc...) asparagine glycosylation is found at asparagine 261 and asparagine 287. Residue glutamate 297 participates in Ca(2+) binding. Glutamate 297 serves as a coordination point for L-tryptophan. Asparagine 386 is a glycosylation site (N-linked (GlcNAc...) asparagine). 415-417 provides a ligand contact to phosphate; that stretch reads RIS. Residues asparagine 446, asparagine 468, and asparagine 488 are each glycosylated (N-linked (GlcNAc...) asparagine). Tyrosine 489 lines the Ca(2+) pocket. Asparagine 541 is a glycosylation site (N-linked (GlcNAc...) asparagine). Residues 542–612 form a cysteine-rich (CR) region; it reads CSRDCQAGTR…IEFLAWTEPF (71 aa). Ca(2+) is bound at residue glycine 557. A glycan (N-linked (GlcNAc...) asparagine) is linked at asparagine 594. A helical membrane pass occupies residues 611-636; the sequence is PFGIALTLFAVLGIFLTAFVLGVFIK. Topologically, residues 637-648 are cytoplasmic; sequence FRNTPIVKATNR. The intracellular loop 1 (ICL1) stretch occupies residues 637–648; that stretch reads FRNTPIVKATNR. The helical transmembrane segment at 649 to 668 threads the bilayer; that stretch reads ELSYLLLFSLLCCFSSSLFF. At 669–674 the chain is on the extracellular side; that stretch reads IGEPQD. The helical transmembrane segment at 675-698 threads the bilayer; the sequence is WTCRLRQPAFGISFVLCISCILVK. The Cytoplasmic portion of the chain corresponds to 699–722; that stretch reads TNRVLLVFEAKIPTSFHRKWWGLN. Residues 699-722 are intracellular loop 2 (ICL2); that stretch reads TNRVLLVFEAKIPTSFHRKWWGLN. Residues 723 to 745 form a helical membrane-spanning segment; sequence LQFLLVFLCTFMQIVICIIWLYT. Residues 746 to 769 are Extracellular-facing; it reads APPSSYRNHELEDEIIFITCHEGS. The helical transmembrane segment at 770–789 threads the bilayer; sequence LMALGSLIGYTCLLAAICFF. The Cytoplasmic segment spans residues 790-805; sequence FAFKSRKLPENFNEAK. The tract at residues 790–805 is intracellular loop 3 (ICL3); sequence FAFKSRKLPENFNEAK. The helical transmembrane segment at 806-828 threads the bilayer; sequence FITFSMLIFFIVWISFIPAYAST. The Extracellular segment spans residues 829 to 832; sequence YGKF. A helical transmembrane segment spans residues 833–854; sequence VSAVEVIAILAASFGLLACIFF. Over 855-1079 the chain is Cytoplasmic; sequence NKVYIILFKP…SSVTENILHS (225 aa). Positions 855–1079 are C-terminus; that stretch reads NKVYIILFKP…SSVTENILHS (225 aa). The tract at residues 880 to 900 is interaction with RNF19A; that stretch reads AFKVAARATLRRPNISRKRSS. Threonine 888 bears the Phosphothreonine mark. Residues 890 to 898 form an arginine-rich retention motif region; the sequence is RRPNISRKR. The tract at residues 894–964 is disordered; that stretch reads ISRKRSSSLG…QQQPQQPRCK (71 aa). Serine 899 is modified (phosphoserine). The span at 900-918 shows a compositional bias: low complexity; that stretch reads SSLGGSTGSIPSSSISSKS. Basic and acidic residues predominate over residues 919–931; the sequence is NSEDRFPQPERQK. Serine 920 is subject to Phosphoserine. Low complexity predominate over residues 932-961; it reads QQQPLALTQQEQQQQPLTLQPQQQQQPQQP. Serine 1062 carries the phosphoserine modification.

It belongs to the G-protein coupled receptor 3 family. Homodimer; disulfide-linked. Interacts with VCP. Interacts with ARRB1. In terms of processing, phosphorylation at Thr-888 by PKC impairs coupling with G(q)/G(11) G-proteins, while it does not affect G(i)/G(o)-coupling. Phosphorylation at Ser-899 by PKA promote plasma membrane localization. Ubiquitinated by RNF19A; which induces proteasomal degradation. Epidermis, kidney and cartilage.

It localises to the cell membrane. With respect to regulation, in resting state, adopts an open conformation, anion-binding promoting the inactive configuration. Upon aromatic amino acid-binding, the groove in the extracellular venus flytrap module is closed, thereby inducing the formation of a novel homodimer interface between subunits. Calcium ions stabilize the active state by enhancing homodimer interactions between membrane-proximal domains to fully activate the receptor. Upon activation, the homodimer adopts an asymmetric configuration of the 7-transmembrane region that primes one protomer for G-protein coupling. G-protein binding expands the transmembrane dimer interface; the restriction imposed by the receptor dimer, in combination with intracellular loop 2 (ICL2), enables G-protein activation by facilitating conformational transition of G-protein alpha. Coupling to different classes of G-proteins results in distinct CASR-G-protein interfaces. Functionally, G-protein-coupled receptor that senses changes in the extracellular concentration of calcium ions and plays a key role in maintaining calcium homeostasis. Senses fluctuations in the circulating calcium concentration: activated by elevated circulating calcium, leading to decreased parathyroid hormone (PTH) secretion in parathyroid glands. In kidneys, acts as a key regulator of renal tubular calcium resorption. Ligand binding causes a conformation change that triggers signaling via guanine nucleotide-binding proteins (G-proteins) and modulates the activity of downstream effectors. CASR is coupled with different G(q)/G(11), G(i)/G(o)- or G(s)-classes of G-proteins depending on the context. In the parathyroid and kidney, CASR signals through G(q)/G(11) and G(i)/G(o) G-proteins: G(q)/G(11) coupling activates phospholipase C-beta, releasing diacylglycerol (DAG) and inositol 1,4,5-trisphosphate (IP3) second messengers, while G(i)/G(o) coupling mediates inhibition of adenylate cyclase activity. The G-protein-coupled receptor activity is activated by a co-agonist mechanism: aromatic amino acids, such as Trp or Phe, act concertedly with divalent cations, such as calcium or magnesium, to achieve full receptor activation. Acts as an activator of the NLRP3 inflammasome via G(i)/G(o)-mediated signaling: down-regulation of cyclic AMP (cAMP) relieving NLRP3 inhibition by cAMP. Acts as a regulator of proton-sensing receptor GPR68 in a seesaw manner: CASR-mediated signaling inhibits GPR68 signaling in response to extracellular calcium, while GPR68 inhibits CASR in presence of extracellular protons. In Mus musculus (Mouse), this protein is Extracellular calcium-sensing receptor.